The primary structure comprises 416 residues: Gamma-glutamyl phosphate reductase (416 aa).

The protein belongs to the gamma-glutamyl phosphate reductase family.

It is found in the cytoplasm. It catalyses the reaction L-glutamate 5-semialdehyde + phosphate + NADP(+) = L-glutamyl 5-phosphate + NADPH + H(+). It participates in amino-acid biosynthesis; L-proline biosynthesis; L-glutamate 5-semialdehyde from L-glutamate: step 2/2. Its function is as follows. Catalyzes the NADPH-dependent reduction of L-glutamate 5-phosphate into L-glutamate 5-semialdehyde and phosphate. The product spontaneously undergoes cyclization to form 1-pyrroline-5-carboxylate. This Streptococcus thermophilus protein is Gamma-glutamyl phosphate reductase.